We begin with the raw amino-acid sequence, 311 residues long: Protein translocase subunit SecF (311 aa).

Transmembrane regions (helical) follow at residues 19–39 (AIYASLFLIGVSLVSLFTQGL), 142–162 (MLAMLYAMVAILIYISFRFEL), 166–186 (LGAVLALVHDVVLTMGFFSVL), 192–212 (LVVVAALLTVVGYSLNDTIVV), 245–265 (ITSLTTVLVLIALFVLGGAVI), and 272–292 (LLFGVGIGTYSSIFVASPLVL).

Belongs to the SecD/SecF family. SecF subfamily. As to quaternary structure, forms a complex with SecD. Part of the essential Sec protein translocation apparatus which comprises SecA, SecYEG and auxiliary proteins SecDF-YajC and YidC.

The protein resides in the cell inner membrane. Its function is as follows. Part of the Sec protein translocase complex. Interacts with the SecYEG preprotein conducting channel. SecDF uses the proton motive force (PMF) to complete protein translocation after the ATP-dependent function of SecA. This chain is Protein translocase subunit SecF, found in Magnetococcus marinus (strain ATCC BAA-1437 / JCM 17883 / MC-1).